The following is a 313-amino-acid chain: NADH-ubiquinone oxidoreductase chain 2 (313 aa).

The next 10 membrane-spanning stretches (helical) occupy residues 3-23 (IWII…FIFW), 47-67 (SMIT…ISSF), 81-101 (INIS…LIMI), 105-125 (LTFY…LLII), 128-148 (FMNS…SIMA), 153-173 (LIKQ…LCLI), 177-197 (MNFW…IIIN), 220-240 (NTMI…GFFM), 253-275 (LIFM…RILT), and 293-313 (KSNF…NIFF).

This sequence belongs to the complex I subunit 2 family.

It is found in the mitochondrion inner membrane. The catalysed reaction is a ubiquinone + NADH + 5 H(+)(in) = a ubiquinol + NAD(+) + 4 H(+)(out). In terms of biological role, core subunit of the mitochondrial membrane respiratory chain NADH dehydrogenase (Complex I) that is believed to belong to the minimal assembly required for catalysis. Complex I functions in the transfer of electrons from NADH to the respiratory chain. The immediate electron acceptor for the enzyme is believed to be ubiquinone. The chain is NADH-ubiquinone oxidoreductase chain 2 (ND2) from Rhipicephalus sanguineus (Brown dog tick).